Here is a 105-residue protein sequence, read N- to C-terminus: Putative membrane protein insertion efficiency factor (105 aa).

It belongs to the UPF0161 family.

It is found in the cell membrane. Its function is as follows. Could be involved in insertion of integral membrane proteins into the membrane. In Bifidobacterium longum subsp. infantis (strain ATCC 15697 / DSM 20088 / JCM 1222 / NCTC 11817 / S12), this protein is Putative membrane protein insertion efficiency factor.